The sequence spans 865 residues: cGMP-specific 3',5'-cyclic phosphodiesterase (865 aa).

Serine 92 carries the post-translational modification Phosphoserine. 2 consecutive GAF domains span residues 154–304 and 336–493; these read DVTA…GIVL and SLEV…GLGI. The 325-residue stretch at 526–850 folds into the PDEase domain; the sequence is ETRELQALSA…QKWQALAEQQ (325 aa). The active-site Proton donor is the histidine 603. Zn(2+)-binding residues include histidine 607, histidine 643, aspartate 644, and aspartate 754. Residue aspartate 644 coordinates Mg(2+). Glutamine 807 lines the 3',5'-cyclic GMP pocket.

It belongs to the cyclic nucleotide phosphodiesterase family. The cofactor is Zn(2+). Mg(2+) is required as a cofactor. Post-translationally, phosphorylation is regulated by binding of cGMP to the two allosteric sites. Phosphorylation by PRKG1 leads to its activation.

It carries out the reaction 3',5'-cyclic GMP + H2O = GMP + H(+). It functions in the pathway purine metabolism; 3',5'-cyclic GMP degradation; GMP from 3',5'-cyclic GMP: step 1/1. Plays a role in signal transduction by regulating the intracellular concentration of cyclic nucleotides. This phosphodiesterase catalyzes the specific hydrolysis of cGMP to 5'-GMP. Specifically regulates nitric-oxide-generated cGMP. This is cGMP-specific 3',5'-cyclic phosphodiesterase (Pde5a) from Mus musculus (Mouse).